We begin with the raw amino-acid sequence, 199 residues long: Translation machinery-associated protein 22 (199 aa).

In terms of domain architecture, SUI1 spans 97 to 168 (VVIRREARTK…EVEAYIHALL (72 aa)).

The protein belongs to the DENR family. Interacts with the 40S ribosomal subunit.

Its subcellular location is the cytoplasm. The protein is Translation machinery-associated protein 22 (TMA22) of Eremothecium gossypii (strain ATCC 10895 / CBS 109.51 / FGSC 9923 / NRRL Y-1056) (Yeast).